Here is a 417-residue protein sequence, read N- to C-terminus: Gamma-glutamyl phosphate reductase (417 aa).

Belongs to the gamma-glutamyl phosphate reductase family.

It localises to the cytoplasm. It catalyses the reaction L-glutamate 5-semialdehyde + phosphate + NADP(+) = L-glutamyl 5-phosphate + NADPH + H(+). The protein operates within amino-acid biosynthesis; L-proline biosynthesis; L-glutamate 5-semialdehyde from L-glutamate: step 2/2. Catalyzes the NADPH-dependent reduction of L-glutamate 5-phosphate into L-glutamate 5-semialdehyde and phosphate. The product spontaneously undergoes cyclization to form 1-pyrroline-5-carboxylate. In Escherichia coli O157:H7, this protein is Gamma-glutamyl phosphate reductase.